Consider the following 204-residue polypeptide: Probable GTP-binding protein EngB (204 aa).

Positions 27–201 (SGIEIAFAGR…SEKLDQWFSP (175 aa)) constitute an EngB-type G domain. GTP contacts are provided by residues 35–42 (GRSNAGKS), 62–66 (GRTQL), 80–83 (DLPG), 147–150 (TKAD), and 180–182 (FSA). Residues Ser42 and Thr64 each coordinate Mg(2+).

The protein belongs to the TRAFAC class TrmE-Era-EngA-EngB-Septin-like GTPase superfamily. EngB GTPase family. It depends on Mg(2+) as a cofactor.

Functionally, necessary for normal cell division and for the maintenance of normal septation. This Histophilus somni (strain 129Pt) (Haemophilus somnus) protein is Probable GTP-binding protein EngB.